The sequence spans 800 residues: Cation/H(+) antiporter 9 (800 aa).

The next 12 membrane-spanning stretches (helical) occupy residues valine 43–isoleucine 63, isoleucine 73–leucine 93, asparagine 110–valine 130, isoleucine 145–phenylalanine 165, valine 186–leucine 206, isoleucine 216–serine 236, glycine 247–phenylalanine 267, valine 287–phenylalanine 306, leucine 338–valine 358, isoleucine 371–isoleucine 391, valine 401–alanine 421, and alanine 430–isoleucine 450.

It belongs to the monovalent cation:proton antiporter 2 (CPA2) transporter (TC 2.A.37) family. CHX (TC 2.A.37.4) subfamily.

It localises to the membrane. In terms of biological role, may operate as a cation/H(+) antiporter. This Arabidopsis thaliana (Mouse-ear cress) protein is Cation/H(+) antiporter 9 (CHX9).